Consider the following 293-residue polypeptide: Protein YIF1A (293 aa).

The tract at residues 1 to 27 (MAYHSAYGVHGSKHRTRAAPDPPPLFD) is disordered. Alanine 2 bears the N-acetylalanine mark. Residues 2-138 (AYHSAYGVHG…PPRKDLNAPD (137 aa)) lie on the Cytoplasmic side of the membrane. Serine 12 bears the Phosphoserine mark. The helical transmembrane segment at 139-159 (LYIPTMAFITYVLLAGMALGI) threads the bilayer. Residues 160–174 (QQRFSPEVLGLCAST) lie on the Lumenal side of the membrane. The chain crosses the membrane as a helical span at residues 175-195 (ALVWVFMEVLALLLGLYLATV). Over 196–203 (RSELSTFH) the chain is Cytoplasmic. The chain crosses the membrane as a helical span at residues 204 to 226 (LLAYSGYKYVGMILSVLTGLLFG). Residues 227–229 (SDG) are Lumenal-facing. A helical membrane pass occupies residues 230-249 (YYVALAWTSSALMYFIVRSL). Residues 250–271 (RTAASGPDSMGGPAPRQRLQLY) lie on the Cytoplasmic side of the membrane. The helical transmembrane segment at 272-292 (LTLGAAAFQPLIIYWLTFHLV) threads the bilayer.

It belongs to the YIF1 family. As to quaternary structure, interacts with YIPF5.

It is found in the endoplasmic reticulum membrane. Its subcellular location is the golgi apparatus membrane. It localises to the endoplasmic reticulum-Golgi intermediate compartment membrane. Its function is as follows. Possible role in transport between endoplasmic reticulum and Golgi. In Mus musculus (Mouse), this protein is Protein YIF1A (Yif1a).